A 791-amino-acid chain; its full sequence is Calcium-transporting ATPase CtpE (791 aa).

Helical transmembrane passes span 53–73, 213–233, and 252–272; these read LFVI…LLII, ILQF…YTQL, and VPMV…VGVV. Residue aspartate 299 is the 4-aspartylphosphate intermediate of the active site. Residues aspartate 299, threonine 301, and aspartate 530 each contribute to the Mg(2+) site. Transmembrane regions (helical) follow at residues 596–616, 627–647, 664–684, 697–717, 725–745, and 757–777; these read VYSV…KIFG, IHVT…LSLA, AALP…LVAY, ASTA…AVVA, VLLV…PLAQ, and VTSV…VLWW.

This sequence belongs to the cation transport ATPase (P-type) (TC 3.A.3) family.

The protein resides in the cell membrane. It carries out the reaction Ca(2+)(in) + ATP + H2O = Ca(2+)(out) + ADP + phosphate + H(+). P-type ATPase involved in specific uptake of calcium. Essential for growth and maintenance of cell surface integrity under Ca(2+)-deficient conditions. This Mycolicibacterium smegmatis (strain ATCC 700084 / mc(2)155) (Mycobacterium smegmatis) protein is Calcium-transporting ATPase CtpE.